Consider the following 381-residue polypeptide: Putative steryl acetyl hydrolase mug81 (381 aa).

Residues 1–9 are Cytoplasmic-facing; the sequence is MISLSLLYR. Residues 10 to 30 traverse the membrane as a helical; Signal-anchor for type II membrane protein segment; that stretch reads ILTLPIILVGTTILYFTIGTN. At 31 to 381 the chain is on the lumenal side; that stretch reads FPHDELRHNL…YTFLRETFEE (351 aa). Positions 125 to 127 match the Involved in the stabilization of the negatively charged intermediate by the formation of the oxyanion hole motif; it reads HGG. An N-linked (GlcNAc...) asparagine glycan is attached at Asn-193. Residue Ser-200 is part of the active site.

Belongs to the 'GDXG' lipolytic enzyme family.

It is found in the cytoplasm. Its subcellular location is the endoplasmic reticulum membrane. Its function is as follows. Required for the deacetylation of acetylated sterols. Has a role in meiosis. This Schizosaccharomyces pombe (strain 972 / ATCC 24843) (Fission yeast) protein is Putative steryl acetyl hydrolase mug81 (mug180).